A 556-amino-acid chain; its full sequence is Glucose-6-phosphate isomerase (556 aa).

Catalysis depends on Glu-364, which acts as the Proton donor. Catalysis depends on residues His-395 and Lys-521.

This sequence belongs to the GPI family.

Its subcellular location is the cytoplasm. It catalyses the reaction alpha-D-glucose 6-phosphate = beta-D-fructose 6-phosphate. Its pathway is carbohydrate biosynthesis; gluconeogenesis. It participates in carbohydrate degradation; glycolysis; D-glyceraldehyde 3-phosphate and glycerone phosphate from D-glucose: step 2/4. Catalyzes the reversible isomerization of glucose-6-phosphate to fructose-6-phosphate. This is Glucose-6-phosphate isomerase from Corynebacterium kroppenstedtii (strain DSM 44385 / JCM 11950 / CIP 105744 / CCUG 35717).